A 173-amino-acid chain; its full sequence is Glycine cleavage system H protein, mitochondrial (173 aa).

Residues 1–48 (MALRVVRSVRALLCTLRAVPSPAAPCPPRPWQLGVGAVRTLRTGPALL) constitute a mitochondrion transit peptide. A Lipoyl-binding domain is found at 66–148 (IGTVGISNFA…YEDGWLIKMT (83 aa)). N6-lipoyllysine is present on lysine 107.

Belongs to the GcvH family. In terms of assembly, interacts with GLDC. The glycine cleavage system is composed of four proteins: P (GLDC), T (GCST), L (DLD) and H (GCSH). The cofactor is (R)-lipoate.

The protein resides in the mitochondrion. The glycine cleavage system catalyzes the degradation of glycine. The H protein (GCSH) shuttles the methylamine group of glycine from the P protein (GLDC) to the T protein (GCST). Has a pivotal role in the lipoylation of enzymes involved in cellular energetics such as the mitochondrial dihydrolipoyllysine-residue acetyltransferase component of pyruvate dehydrogenase complex (DLAT), and the mitochondrial dihydrolipoyllysine-residue succinyltransferase component of 2-oxoglutarate dehydrogenase complex (DLST). This is Glycine cleavage system H protein, mitochondrial from Homo sapiens (Human).